The chain runs to 673 residues: Ion-translocating oxidoreductase complex subunit C (673 aa).

4Fe-4S ferredoxin-type domains lie at Met-368–Tyr-397 and Lys-407–Phe-436. [4Fe-4S] cluster-binding residues include Cys-377, Cys-380, Cys-383, Cys-387, Cys-416, Cys-419, Cys-422, and Cys-426. The tract at residues Glu-529–Pro-554 is disordered.

It belongs to the 4Fe4S bacterial-type ferredoxin family. RnfC subfamily. In terms of assembly, the complex is composed of six subunits: RsxA, RsxB, RsxC, RsxD, RsxE and RsxG. Requires [4Fe-4S] cluster as cofactor.

It is found in the cell inner membrane. Part of a membrane-bound complex that couples electron transfer with translocation of ions across the membrane. Required to maintain the reduced state of SoxR. The chain is Ion-translocating oxidoreductase complex subunit C from Salmonella arizonae (strain ATCC BAA-731 / CDC346-86 / RSK2980).